A 181-amino-acid chain; its full sequence is Inner membrane-spanning protein YciB (181 aa).

5 helical membrane-spanning segments follow: residues 10–30, 50–70, 80–100, 118–138, and 148–168; these read LVIFFAVYKFFDIYIASGALI, MHLITFAMVSVFGSLTLILHD, IVYALFAIALAVSQFMNKPIL, VTWYWVLFFVVCGLVNIYVAF, and FKVFGLTALTLINTVLTVFYL.

This sequence belongs to the YciB family.

The protein resides in the cell inner membrane. Functionally, plays a role in cell envelope biogenesis, maintenance of cell envelope integrity and membrane homeostasis. This is Inner membrane-spanning protein YciB from Shewanella piezotolerans (strain WP3 / JCM 13877).